A 667-amino-acid chain; its full sequence is Transketolase 2 (667 aa).

Residue His-25 coordinates substrate. Thiamine diphosphate-binding positions include His-65 and 113–115 (GPL). Mg(2+) is bound at residue Asp-154. The thiamine diphosphate site is built by Gly-155 and Asn-184. Positions 184 and 186 each coordinate Mg(2+). Substrate is bound at residue His-260. Residue His-260 participates in thiamine diphosphate binding. Lys-342 is modified (N6-acetyllysine). Substrate is bound by residues Arg-357 and Ser-384. The active-site Proton donor is the Glu-410. Phe-436 contributes to the thiamine diphosphate binding site. 3 residues coordinate substrate: His-460, Asp-468, and Arg-519.

This sequence belongs to the transketolase family. As to quaternary structure, homodimer. It depends on Mg(2+) as a cofactor. Requires Ca(2+) as cofactor. The cofactor is Mn(2+). Co(2+) is required as a cofactor. Thiamine diphosphate serves as cofactor.

The enzyme catalyses D-sedoheptulose 7-phosphate + D-glyceraldehyde 3-phosphate = aldehydo-D-ribose 5-phosphate + D-xylulose 5-phosphate. Catalyzes the reversible transfer of a two-carbon ketol group from sedoheptulose-7-phosphate to glyceraldehyde-3-phosphate, producing xylulose-5-phosphate and ribose-5-phosphate. Catalyzes the transfer of a two-carbon ketol group from a ketose donor to an aldose acceptor, via a covalent intermediate with the cofactor thiamine pyrophosphate. This chain is Transketolase 2, found in Escherichia coli (strain K12).